The chain runs to 204 residues: 5'-deoxynucleotidase HDDC2 (204 aa).

Alanine 2 carries the N-acetylalanine modification. Residues serine 3 and serine 5 each carry the phosphoserine modification. The HD domain maps to 46 to 148 (VSDHMYRMAV…VKQLDQCEMI (103 aa)). Positions 49, 77, 78, 81, 86, 87, and 143 each coordinate a divalent metal cation. A Phosphoserine modification is found at serine 204.

It belongs to the HDDC2 family. Homodimer. It depends on Mn(2+) as a cofactor. The cofactor is Co(2+). Mg(2+) serves as cofactor.

It carries out the reaction a 2'-deoxyribonucleoside 5'-phosphate + H2O = a 2'-deoxyribonucleoside + phosphate. Catalyzes the dephosphorylation of the nucleoside 5'-monophosphates deoxyadenosine monophosphate (dAMP), deoxycytidine monophosphate (dCMP), deoxyguanosine monophosphate (dGMP) and deoxythymidine monophosphate (dTMP). The protein is 5'-deoxynucleotidase HDDC2 (HDDC2) of Homo sapiens (Human).